Here is a 305-residue protein sequence, read N- to C-terminus: PI-PLC X domain-containing protein 2 (305 aa).

The PI-PLC X-box domain maps to 42–215 (HLHNLPLSNL…NCQVLIFYHC (174 aa)). Active-site residues include His-57 and His-132.

In terms of tissue distribution, widely expressed.

The protein resides in the nucleus. The catalysed reaction is a 1,2-diacyl-sn-glycero-3-phospho-(1D-myo-inositol) + H2O = 1D-myo-inositol 1-phosphate + a 1,2-diacyl-sn-glycerol + H(+). Catalyzes the hydrolysis of inositol from phosphatidylinositol (1,2-diacyl-sn-glycero-3-phospho-(1D-myo-inositol), PI). Could also hydrolyze various multi-phosphorylated derivatives of PI, such as phosphatidylinositol-4,5 bisphosphate (PIP2), releasing inositol-1,4,5-trisphosphate (IP3) and the protein kinase C activator diacylglycerol (DAG), therefore mediating cell signaling. In Homo sapiens (Human), this protein is PI-PLC X domain-containing protein 2 (PLCXD2).